The chain runs to 131 residues: Translation initiation factor 5A (131 aa).

Position 37 is a hypusine (lysine 37).

The protein belongs to the eIF-5A family.

It is found in the cytoplasm. Its function is as follows. Functions by promoting the formation of the first peptide bond. The protein is Translation initiation factor 5A (eIF5A) of Methanococcus maripaludis (strain C5 / ATCC BAA-1333).